Here is a 448-residue protein sequence, read N- to C-terminus: Tapasin (448 aa).

A signal peptide spans 1 to 20 (MKSLSLLLAVALGLATAVSA). Residues 21-414 (GPAVIECWFV…LSGPSLEDSV (394 aa)) lie on the Lumenal side of the membrane. Cysteine 27 and cysteine 91 are disulfide-bonded. A glycan (N-linked (GlcNAc...) asparagine) is linked at asparagine 253. An Ig-like C1-type domain is found at 292 to 399 (PKVSLMPATL…PASGRSAEVT (108 aa)). A disulfide bond links cysteine 315 and cysteine 382. A helical membrane pass occupies residues 415 to 435 (GLFLSAFLLLGLFKALGWAAV). Residues 436 to 448 (YLSTCKDSKKKAE) are Cytoplasmic-facing.

In terms of assembly, heterodimer with PDIA3; disulfide-linked. Obligatory mediator for the interaction between newly assembled MHC class I molecules, calreticulin, PDIA3 and TAP. Up to 4 MHC class I/tapasin complexes bind to 1 TAP. Interacts with HLA-G-B2M complex; this interaction is required for loading of high affinity peptides. On its own or as part of MHC class I peptide loading complex, interacts with ligand-free MR1 or MR1-B2M complex, providing for stable MR1 pools ready for metabolite antigen processing. In terms of tissue distribution, neutrophils, mostly in fully differentiated cells.

The protein resides in the endoplasmic reticulum membrane. In terms of biological role, involved in the association of MHC class I with transporter associated with antigen processing (TAP) and in the assembly of MHC class I with peptide (peptide loading). This chain is Tapasin, found in Homo sapiens (Human).